A 279-amino-acid polypeptide reads, in one-letter code: Phospholipase A and acyltransferase 5 (279 aa).

Disordered stretches follow at residues 1–53 (MGLS…GLNS) and 70–117 (QLPA…ENEG). Over residues 97-106 (LETTPSQKAD) the composition is skewed to polar residues. Residues 135–249 (LIEIFRIGYE…LRYGVPRSQQ (115 aa)) form the LRAT domain. Active-site residues include H145 and H157. C233 serves as the catalytic Acyl-thioester intermediate.

It belongs to the H-rev107 family. In terms of tissue distribution, highest expression level in testis and pancreas.

It localises to the cytoplasm. The protein resides in the cytosol. It catalyses the reaction a 1,2-diacyl-sn-glycero-3-phosphocholine + H2O = a 1-acyl-sn-glycero-3-phosphocholine + a fatty acid + H(+). It carries out the reaction a 1,2-diacyl-sn-glycero-3-phosphocholine + H2O = a 2-acyl-sn-glycero-3-phosphocholine + a fatty acid + H(+). The catalysed reaction is 1-hexadecanoyl-2-(5Z,8Z,11Z,14Z-eicosatetraenoyl)-sn-glycero-3-phosphocholine + 1,2-di-(9Z-octadecenoyl)-sn-glycero-3-phosphoethanolamine = N-(5Z,8Z,11Z,14Z-eicosatetraenoyl)-1,2-di-(9Z-octadecenoyl)-sn-glycero-3-phosphoethanolamine + 1-hexadecanoyl-sn-glycero-3-phosphocholine + H(+). The enzyme catalyses 1,2-di-(9Z-octadecenoyl)-sn-glycero-3-phosphoethanolamine + 1,2-dihexadecanoyl-sn-glycero-3-phosphocholine = N-hexadecanoyl-1,2-di-(9Z-octadecenoyl)-sn-glycero-3-phosphoethanolamine + 1-hexadecanoyl-sn-glycero-3-phosphocholine + H(+). It catalyses the reaction 1,2-di-(9Z-octadecenoyl)-sn-glycero-3-phosphoethanolamine + 1,2-dihexadecanoyl-sn-glycero-3-phosphocholine = N-hexadecanoyl-1,2-di-(9Z-octadecenoyl)-sn-glycero-3-phosphoethanolamine + 2-hexadecanoyl-sn-glycero-3-phosphocholine + H(+). It carries out the reaction a 1,2-diacyl-sn-glycero-3-phosphoethanolamine + a 1,2-diacyl-sn-glycero-3-phosphocholine = an N-acyl-1,2-diacyl-sn-glycero-3-phosphoethanolamine + a 1-acyl-sn-glycero-3-phosphocholine + H(+). The catalysed reaction is a 1,2-diacyl-sn-glycero-3-phosphoethanolamine + a 1,2-diacyl-sn-glycero-3-phosphocholine = an N-acyl-1,2-diacyl-sn-glycero-3-phosphoethanolamine + a 2-acyl-sn-glycero-3-phosphocholine + H(+). The enzyme catalyses 1-hexadecanoyl-2-(9Z-octadecenoyl)-sn-glycero-3-phosphocholine + 1,2-di-(9Z-octadecenoyl)-sn-glycero-3-phosphoethanolamine = N,1,2-tri-(9Z-octadecenoyl)-sn-glycero-3-phosphoethanolamine + 1-hexadecanoyl-sn-glycero-3-phosphocholine + H(+). Exhibits both phospholipase A1/2 and acyltransferase activities. Shows phospholipase A1 (PLA1) and A2 (PLA2) activity, catalyzing the calcium-independent release of fatty acids from the sn-1 or sn-2 position of glycerophospholipids. Shows N-acyltransferase activity, catalyzing the calcium-independent transfer of a fatty acyl group at the sn-1 position of phosphatidylcholine (PC) and other glycerophospholipids to the primary amine of phosphatidylethanolamine (PE), forming N-acylphosphatidylethanolamine (NAPE), which serves as precursor for N-acylethanolamines (NAEs). The protein is Phospholipase A and acyltransferase 5 of Homo sapiens (Human).